Here is a 1005-residue protein sequence, read N- to C-terminus: PH and SEC7 domain-containing protein 4 (1005 aa).

A disordered region spans residues 27 to 66; sequence YPSEIHGHPGPSEPCQEHTCPFDPPESARPDAPHGNSGVE. Phosphoserine is present on residues serine 85, serine 88, and serine 97. Disordered stretches follow at residues 145-189, 287-386, 407-525, and 694-714; these read PSKD…PGSS, LALG…NRGE, TSLL…SSSR, and EEDA…KISS. Residues 161-177 show a composition bias toward acidic residues; that stretch reads EEDEDSGDDSSGPEEEN. Residues 350 to 361 are compositionally biased toward low complexity; the sequence is SQTSQSLSDLTQ. 2 positions are modified to phosphoserine: serine 381 and serine 435. Over residues 428–438 the composition is skewed to low complexity; that stretch reads PVSSQDSSPRV. Composition is skewed to basic and acidic residues over residues 453–465 and 476–488; these read LQKD…SLKE and QEAE…RSED. The SEC7 domain occupies 493–686; it reads QHHVHLASAE…KALYWSIRSE (194 aa). Residues 726 to 841 enclose the PH domain; that stretch reads PTYKQGILAR…WIARINLAAA (116 aa). A coiled-coil region spans residues 870–926; sequence SSLEEQHRSHENCLDAASDDLLDLQRNLPERRGRSRELEEYRLRKEYLEHEKTRYET. The interval 951–1005 is disordered; that stretch reads KETDGSQEPRPSLKKSHSSPSLHQEEAPTTAKVKRNISERRTYRKIIPKRNRNQL. Phosphoserine is present on residues serine 968 and serine 971. Residues 992–1005 show a composition bias toward basic residues; that stretch reads TYRKIIPKRNRNQL.

It localises to the cell membrane. It is found in the cell projection. The protein resides in the ruffle membrane. Functionally, guanine nucleotide exchange factor for ARF6 and ARL14/ARF7. Through ARL14 activation, controls the movement of MHC class II-containing vesicles along the actin cytoskeleton in dendritic cells. Involved in membrane recycling. Interacts with several phosphatidylinositol phosphate species, including phosphatidylinositol 3,4-bisphosphate, phosphatidylinositol 3,5-bisphosphate and phosphatidylinositol 4,5-bisphosphate. In Mus musculus (Mouse), this protein is PH and SEC7 domain-containing protein 4 (Psd4).